Here is a 339-residue protein sequence, read N- to C-terminus: DNA-directed RNA polymerase subunit alpha (339 aa).

The alpha N-terminal domain (alpha-NTD) stretch occupies residues 1–235; that stretch reads MTIQKNWQEL…DQLNVFVNFE (235 aa). Residues 251-339 form an alpha C-terminal domain (alpha-CTD) region; sequence FNPAFLKKVD…ELAKRFEDHY (89 aa).

It belongs to the RNA polymerase alpha chain family. In terms of assembly, homodimer. The RNAP catalytic core consists of 2 alpha, 1 beta, 1 beta' and 1 omega subunit. When a sigma factor is associated with the core the holoenzyme is formed, which can initiate transcription.

The catalysed reaction is RNA(n) + a ribonucleoside 5'-triphosphate = RNA(n+1) + diphosphate. Functionally, DNA-dependent RNA polymerase catalyzes the transcription of DNA into RNA using the four ribonucleoside triphosphates as substrates. The polypeptide is DNA-directed RNA polymerase subunit alpha (Rhodopseudomonas palustris (strain HaA2)).